The chain runs to 63 residues: Large ribosomal subunit protein uL29 (63 aa).

This sequence belongs to the universal ribosomal protein uL29 family.

The chain is Large ribosomal subunit protein uL29 (rpmC) from Aggregatibacter actinomycetemcomitans (Actinobacillus actinomycetemcomitans).